The chain runs to 625 residues: ATP-binding cassette sub-family F member 2 (625 aa).

A disordered region spans residues 1–54 (MPSDLAKKKAAKKKEAAKARQRPRKGHEENGDAITEPQVAEERNEEANGRETTE). Positions 40–54 (AEERNEEANGRETTE) are enriched in basic and acidic residues. 2 ABC transporter domains span residues 88–327 (AHII…ENQM) and 398–615 (IMVQ…VGEE). 120 to 127 (GLNGIGKS) contacts ATP. A Phosphothreonine modification is found at T220. Residue K306 is modified to N6-acetyllysine. 432-439 (GPNGAGKS) contributes to the ATP binding site. A Phosphoserine modification is found at S514.

It belongs to the ABC transporter superfamily. ABCF family. EF3 subfamily.

In Bos taurus (Bovine), this protein is ATP-binding cassette sub-family F member 2 (ABCF2).